Here is a 178-residue protein sequence, read N- to C-terminus: Disulfide bond formation protein B (178 aa).

Residues Met-1–Gly-14 lie on the Cytoplasmic side of the membrane. Residues Trp-15–Tyr-31 traverse the membrane as a helical segment. The Periplasmic portion of the chain corresponds to Phe-32–Val-49. The cysteines at positions 41 and 44 are disulfide-linked. Residues Ala-50 to Pro-65 form a helical membrane-spanning segment. Over Ser-66–Phe-72 the chain is Cytoplasmic. The helical transmembrane segment at Leu-73 to Leu-90 threads the bilayer. Over Lys-91–Gln-145 the chain is Periplasmic. Cys-105 and Cys-131 are disulfide-bonded. Residues Trp-146 to Ser-164 traverse the membrane as a helical segment. The Cytoplasmic segment spans residues Gln-165–Arg-178.

It belongs to the DsbB family.

The protein localises to the cell inner membrane. In terms of biological role, required for disulfide bond formation in some periplasmic proteins. Acts by oxidizing the DsbA protein. The chain is Disulfide bond formation protein B from Mannheimia succiniciproducens (strain KCTC 0769BP / MBEL55E).